The sequence spans 289 residues: 5'-3' exonuclease (289 aa).

In terms of domain architecture, 5'-3' exonuclease spans 166–256 (VEPQKIPDYL…EEDLKIKRPD (91 aa)).

Functionally, 5'-3' exonuclease acting preferentially on double-stranded DNA. This Aquifex aeolicus (strain VF5) protein is 5'-3' exonuclease.